Here is a 309-residue protein sequence, read N- to C-terminus: Porphobilinogen deaminase (309 aa).

C241 is modified (S-(dipyrrolylmethanemethyl)cysteine).

Belongs to the HMBS family. As to quaternary structure, monomer. Requires dipyrromethane as cofactor.

It carries out the reaction 4 porphobilinogen + H2O = hydroxymethylbilane + 4 NH4(+). It functions in the pathway porphyrin-containing compound metabolism; protoporphyrin-IX biosynthesis; coproporphyrinogen-III from 5-aminolevulinate: step 2/4. Its function is as follows. Tetrapolymerization of the monopyrrole PBG into the hydroxymethylbilane pre-uroporphyrinogen in several discrete steps. This is Porphobilinogen deaminase from Bacillus mycoides (strain KBAB4) (Bacillus weihenstephanensis).